The sequence spans 89 residues: Small ribosomal subunit protein uS15 (89 aa).

The protein belongs to the universal ribosomal protein uS15 family. Part of the 30S ribosomal subunit. Forms a bridge to the 50S subunit in the 70S ribosome, contacting the 23S rRNA.

Its function is as follows. One of the primary rRNA binding proteins, it binds directly to 16S rRNA where it helps nucleate assembly of the platform of the 30S subunit by binding and bridging several RNA helices of the 16S rRNA. In terms of biological role, forms an intersubunit bridge (bridge B4) with the 23S rRNA of the 50S subunit in the ribosome. In Pseudomonas fluorescens (strain ATCC BAA-477 / NRRL B-23932 / Pf-5), this protein is Small ribosomal subunit protein uS15.